Reading from the N-terminus, the 234-residue chain is Adenosine 5'-phosphosulfate reductase (234 aa).

Cys-120, Cys-121, Cys-203, and Cys-206 together coordinate [4Fe-4S] cluster. Catalysis depends on Cys-229, which acts as the Nucleophile; cysteine thiosulfonate intermediate.

This sequence belongs to the PAPS reductase family. CysH subfamily. [4Fe-4S] cluster is required as a cofactor.

Its subcellular location is the cytoplasm. It carries out the reaction [thioredoxin]-disulfide + sulfite + AMP + 2 H(+) = adenosine 5'-phosphosulfate + [thioredoxin]-dithiol. It participates in sulfur metabolism; hydrogen sulfide biosynthesis; sulfite from sulfate. In terms of biological role, catalyzes the formation of sulfite from adenosine 5'-phosphosulfate (APS) using thioredoxin as an electron donor. This Bacillus cereus (strain ZK / E33L) protein is Adenosine 5'-phosphosulfate reductase.